Here is an 804-residue protein sequence, read N- to C-terminus: Phenylalanine--tRNA ligase beta subunit (804 aa).

A tRNA-binding domain is found at Gly-39–Phe-147. A B5 domain is found at Leu-401–Val-480. 4 residues coordinate Mg(2+): Asp-458, Asp-464, Glu-467, and Glu-468. Residues Ser-711–Arg-804 form the FDX-ACB domain.

Belongs to the phenylalanyl-tRNA synthetase beta subunit family. Type 1 subfamily. As to quaternary structure, tetramer of two alpha and two beta subunits. Mg(2+) is required as a cofactor.

The protein resides in the cytoplasm. The catalysed reaction is tRNA(Phe) + L-phenylalanine + ATP = L-phenylalanyl-tRNA(Phe) + AMP + diphosphate + H(+). This is Phenylalanine--tRNA ligase beta subunit from Syntrophotalea carbinolica (strain DSM 2380 / NBRC 103641 / GraBd1) (Pelobacter carbinolicus).